The following is a 274-amino-acid chain: Long chain fatty acid elongase 6 (274 aa).

At Met1–Gln30 the chain is on the extracellular side. The helical transmembrane segment at Tyr31 to Met51 threads the bilayer. Topologically, residues Thr52 to Gly69 are cytoplasmic. The chain crosses the membrane as a helical span at residues Leu70 to Phe90. Over Ser91 to Met111 the chain is Extracellular. Residues Phe112–Leu132 traverse the membrane as a helical segment. At Arg133 to Lys135 the chain is on the cytoplasmic side. The helical transmembrane segment at Pro136–Phe156 threads the bilayer. The Extracellular portion of the chain corresponds to Glu157–Asn159. A helical membrane pass occupies residues Leu160–Tyr180. The Cytoplasmic segment spans residues Tyr181–Gln202. Residues Ile203–Gly223 form a helical membrane-spanning segment. Residues Gln224–Pro230 lie on the Extracellular side of the membrane. The helical transmembrane segment at Gly231–Tyr251 threads the bilayer. Residues Tyr252–Glu274 are Cytoplasmic-facing.

This sequence belongs to the ELO family. Expressed in the gut, neurons, pharynx and muscles of the vulva.

Its subcellular location is the membrane. It carries out the reaction isopentadecanoyl-CoA + malonyl-CoA + H(+) = 3-oxoisoheptadecanoyl-CoA + CO2 + CoA. Its pathway is lipid metabolism; fatty acid biosynthesis. Its function is as follows. Catalyzes the first and rate-limiting reaction of the four reactions that constitute the long-chain fatty acids elongation cycle. Uses malonyl-CoA to add 2 carbons per cycle to the chain of long-chain fatty acids. Condensing enzyme required for the formation of isoheptadecanoate (C17iso), which plays critical roles in animal development and growth. The chain is Long chain fatty acid elongase 6 (elo-6) from Caenorhabditis elegans.